The sequence spans 194 residues: tRNA(Phe) 7-((3-amino-3-carboxypropyl)-4-demethylwyosine(37)-N(4))-methyltransferase 1 (194 aa).

The protein belongs to the TYW3 family.

The catalysed reaction is 4-demethyl-7-[(3S)-3-amino-3-carboxypropyl]wyosine(37) in tRNA(Phe) + S-adenosyl-L-methionine = 7-[(3S)-3-amino-3-carboxypropyl]wyosine(37) in tRNA(Phe) + S-adenosyl-L-homocysteine + H(+). S-adenosyl-L-methionine-dependent methyltransferase that acts as a component of the wyosine derivatives biosynthesis pathway. Probably methylates N-4 position of wybutosine-86 to produce wybutosine-72. This is tRNA(Phe) 7-((3-amino-3-carboxypropyl)-4-demethylwyosine(37)-N(4))-methyltransferase 1 from Pyrococcus abyssi (strain GE5 / Orsay).